A 229-amino-acid polypeptide reads, in one-letter code: Movement and silencing protein TGBp1 (229 aa).

Residues 1–114 (MVEFTKRLLL…PAAQVPHFVK (114 aa)) form the (+)RNA virus helicase ATP-binding domain. One can recognise a (+)RNA virus helicase C-terminal domain in the interval 115 to 229 (LFSHRCGLNS…MSFDAADTSA (115 aa)).

Belongs to the Tymovirales TGBp1 protein family. Homodimer and homooligomer. Interacts with capsid protein. Interacts with host AGO1; this interaction targets the host protein for degradation, thereby suppressing the antiviral RNA silencing.

Its subcellular location is the host cytoplasm. In terms of biological role, transports viral genome to neighboring plant cells directly through plasmosdesmata, without any budding. The movement protein allows efficient cell to cell propagation, by bypassing the host cell wall barrier. Increases plasmodesma size exclusion limit. Acts as a suppressor of RNA-mediated gene silencing, also known as post-transcriptional gene silencing (PTGS), a mechanism of plant viral defense that limits the accumulation of viral RNAs. The sequence is that of Movement and silencing protein TGBp1 from Strawberry mild yellow edge-associated virus (SMYEaV).